A 475-amino-acid chain; its full sequence is tRNA modification GTPase MnmE (475 aa).

Arg-24, Glu-81, and Lys-124 together coordinate (6S)-5-formyl-5,6,7,8-tetrahydrofolate. The TrmE-type G domain occupies 220-397 (GLSVVLAGQP…MRSELLRLIG (178 aa)). Asn-230 contributes to the K(+) binding site. Residues 230 to 235 (NVGKSS), 249 to 255 (TPIAGTT), 274 to 277 (DTAG), and 378 to 380 (SAR) each bind GTP. Ser-234 contributes to the Mg(2+) binding site. Residues Thr-249, Ile-251, and Thr-254 each contribute to the K(+) site. Thr-255 contacts Mg(2+). Lys-475 serves as a coordination point for (6S)-5-formyl-5,6,7,8-tetrahydrofolate.

This sequence belongs to the TRAFAC class TrmE-Era-EngA-EngB-Septin-like GTPase superfamily. TrmE GTPase family. Homodimer. Heterotetramer of two MnmE and two MnmG subunits. K(+) serves as cofactor.

It is found in the cytoplasm. Functionally, exhibits a very high intrinsic GTPase hydrolysis rate. Involved in the addition of a carboxymethylaminomethyl (cmnm) group at the wobble position (U34) of certain tRNAs, forming tRNA-cmnm(5)s(2)U34. The sequence is that of tRNA modification GTPase MnmE from Cupriavidus metallidurans (strain ATCC 43123 / DSM 2839 / NBRC 102507 / CH34) (Ralstonia metallidurans).